Consider the following 132-residue polypeptide: Flagellar assembly factor FliW (132 aa).

It belongs to the FliW family. In terms of assembly, interacts with translational regulator CsrA and flagellin(s).

Its subcellular location is the cytoplasm. Its function is as follows. Acts as an anti-CsrA protein, binds CsrA and prevents it from repressing translation of its target genes, one of which is flagellin. Binds to flagellin and participates in the assembly of the flagellum. The chain is Flagellar assembly factor FliW from Borreliella afzelii (strain PKo) (Borrelia afzelii).